A 249-amino-acid chain; its full sequence is Deoxyribose-phosphate aldolase (249 aa).

Residue Asp109 is the Proton donor/acceptor of the active site. Catalysis depends on Lys171, which acts as the Schiff-base intermediate with acetaldehyde. Lys200 serves as the catalytic Proton donor/acceptor.

This sequence belongs to the DeoC/FbaB aldolase family. DeoC type 1 subfamily.

The protein resides in the cytoplasm. The catalysed reaction is 2-deoxy-D-ribose 5-phosphate = D-glyceraldehyde 3-phosphate + acetaldehyde. The protein operates within carbohydrate degradation; 2-deoxy-D-ribose 1-phosphate degradation; D-glyceraldehyde 3-phosphate and acetaldehyde from 2-deoxy-alpha-D-ribose 1-phosphate: step 2/2. In terms of biological role, catalyzes a reversible aldol reaction between acetaldehyde and D-glyceraldehyde 3-phosphate to generate 2-deoxy-D-ribose 5-phosphate. This chain is Deoxyribose-phosphate aldolase, found in Klebsiella pneumoniae subsp. pneumoniae (strain ATCC 700721 / MGH 78578).